Reading from the N-terminus, the 1307-residue chain is Contactin-associated protein like 5-3 (1307 aa).

An N-terminal signal peptide occupies residues Met1–Thr24. Residues Ala25–Ser1238 are Extracellular-facing. The F5/8 type C domain maps to Cys31–Cys175. A disulfide bridge connects residues Cys31 and Cys175. Laminin G-like domains are found at residues Val181 to Cys361 and Pro368 to Cys545. N-linked (GlcNAc...) asparagine glycosylation occurs at Asn283. An intrachain disulfide couples Cys330 to Cys361. N-linked (GlcNAc...) asparagine glycosylation is present at Asn497. Disulfide bonds link Cys513/Cys545, Cys551/Cys562, Cys556/Cys571, and Cys573/Cys583. One can recognise an EGF-like 1 domain in the interval Ile547–His584. Positions Asp585–Trp792 constitute a Fibrinogen C-terminal domain. N-linked (GlcNAc...) asparagine glycosylation is found at Asn600, Asn624, and Asn637. One can recognise a Laminin G-like 3 domain in the interval Asn793 to Cys958. 5 disulfides stabilise this stretch: Cys931-Cys958, Cys962-Cys975, Cys969-Cys984, Cys986-Cys996, and Cys1165-Cys1200. The EGF-like 2 domain occupies Pro959–Gln997. A Laminin G-like 4 domain is found at Pro1019 to Cys1200. A helical membrane pass occupies residues Ala1239 to Met1259. Residues Thr1260–Ile1307 lie on the Cytoplasmic side of the membrane.

The protein belongs to the neurexin family.

Its subcellular location is the membrane. Its function is as follows. May play a role in the correct development and proper functioning of the peripheral and central nervous system and be involved in cell adhesion and intercellular communication. In Rattus norvegicus (Rat), this protein is Contactin-associated protein like 5-3 (Cntnap5c).